The primary structure comprises 94 residues: MAVLTDDQVDAALPELGGWERADGALRRSVKFPAFLDGIEAVRRVAERAEAKDHHPDIDIRWRTVTFVLVTHSEGGITEKDLQMAREIDEILDR.

It belongs to the pterin-4-alpha-carbinolamine dehydratase family.

It catalyses the reaction (4aS,6R)-4a-hydroxy-L-erythro-5,6,7,8-tetrahydrobiopterin = (6R)-L-erythro-6,7-dihydrobiopterin + H2O. The polypeptide is Putative pterin-4-alpha-carbinolamine dehydratase (Mycobacterium sp. (strain KMS)).